The sequence spans 306 residues: tRNA pseudouridine synthase B (306 aa).

Catalysis depends on D43, which acts as the Nucleophile.

The protein belongs to the pseudouridine synthase TruB family. Type 1 subfamily.

It carries out the reaction uridine(55) in tRNA = pseudouridine(55) in tRNA. Responsible for synthesis of pseudouridine from uracil-55 in the psi GC loop of transfer RNAs. The polypeptide is tRNA pseudouridine synthase B (Anaplasma marginale (strain St. Maries)).